Consider the following 371-residue polypeptide: uncharacterized protein (371 aa).

Solcar repeat units lie at residues 3 to 98 (DDSL…CKVL), 131 to 276 (RYWG…FKSF), and 284 to 369 (KSNF…VRKW). A run of 6 helical transmembrane segments spans residues 9 to 29 (AIAG…LDVV), 73 to 93 (GVGP…VVYE), 137 to 157 (IFSA…IWVV), 253 to 273 (LFPS…YEYF), 290 to 310 (VLAA…HEVL), and 341 to 362 (YYSG…TFLS).

The protein belongs to the mitochondrial carrier (TC 2.A.29) family.

The protein resides in the mitochondrion inner membrane. This is an uncharacterized protein from Schizosaccharomyces pombe (strain 972 / ATCC 24843) (Fission yeast).